A 559-amino-acid chain; its full sequence is MRRLSSWRKMATAEKQKHDGRVKIGHYILGDTLGVGTFGKVKVGKHELTGHKVAVKILNRQKIRSLDVVGKIRREIQNLKLFRHPHIIKLYQVISTPSDIFMVMEYVSGGELFDYICKNGRLDEKESRRLFQQILSGVDYCHRHMVVHRDLKPENVLLDAHMNAKIADFGLSNMMSDGEFLRTSCGSPNYAAPEVISGRLYAGPEVDIWSSGVILYALLCGTLPFDDDHVPTLFKKICDGIFYTPQYLNPSVISLLKHMLQVDPMKRAAIKDIREHEWFKQDLPKYLFPEDPSYSSTMIDDEALKEVCEKFECSEEEVLSCLYNRNHQDPLAVAYHLIIDNRRIMNEAKDFYLATSPPDSFLDDHHLTRPHPERVPFLVAETPRARHTLDELNPQKSKHQGVRKAKWHLGIRSQSRPNDIMAEVCRAIKQLDYEWKVVNPYYLRVRRKNPVTSTFSKMSLQLYQVDSRTYLLDFRSIDDEITEAKSGTATPQRSGSISNYRSCQRSDSDAEAQGKPSDVSLTSSVTSLDSSPVDVAPRPGSHTIEFFEMCANLIKILAQ.

Residues 27–279 (YILGDTLGVG…IKDIREHEWF (253 aa)) form the Protein kinase domain. A Phosphothreonine modification is found at Thr-32. Residues 33 to 41 (LGVGTFGKV) and Lys-56 each bind ATP. Residue Asp-150 is the Proton acceptor of the active site. Thr-183 is subject to Phosphothreonine; by LKB1 and CaMKK2. The interval 302–381 (EALKEVCEKF…PERVPFLVAE (80 aa)) is AIS. At Thr-355 the chain carries Phosphothreonine. A Phosphoserine modification is found at Ser-356. The residue at position 360 (Ser-360) is a Phosphoserine; by ULK1. A Phosphothreonine; by ULK1 modification is found at Thr-368. Thr-382 carries the post-translational modification Phosphothreonine. Ser-397 bears the Phosphoserine; by ULK1 mark. Phosphoserine is present on residues Ser-467 and Ser-486. Residues 485 to 505 (KSGTATPQRSGSISNYRSCQR) are compositionally biased toward polar residues. The interval 485 to 536 (KSGTATPQRSGSISNYRSCQRSDSDAEAQGKPSDVSLTSSVTSLDSSPVDVA) is disordered. Thr-488 carries the phosphothreonine; by ULK1 modification. The residue at position 490 (Thr-490) is a Phosphothreonine. Phosphoserine occurs at positions 496, 508, 524, and 527. Over residues 516 to 535 (PSDVSLTSSVTSLDSSPVDV) the composition is skewed to low complexity.

This sequence belongs to the protein kinase superfamily. CAMK Ser/Thr protein kinase family. SNF1 subfamily. As to quaternary structure, AMPK is a heterotrimer of an alpha catalytic subunit (PRKAA1 or PRKAA2), a beta (PRKAB1 or PRKAB2) and a gamma non-catalytic subunits (PRKAG1, PRKAG2 or PRKAG3). Interacts with FNIP1 and FNIP2. The cofactor is Mg(2+). Post-translationally, phosphorylated at Thr-183 by STK11/LKB1 in complex with STE20-related adapter-alpha (STRADA) pseudo kinase and CAB39. Also phosphorylated at Thr-183 by CAMKK2; triggered by a rise in intracellular calcium ions, without detectable changes in the AMP/ATP ratio. CAMKK1 can also phosphorylate Thr-183, but at a much lower level. Dephosphorylated by protein phosphatase 2A and 2C (PP2A and PP2C). Phosphorylated by ULK1 and ULK2; leading to negatively regulate AMPK activity and suggesting the existence of a regulatory feedback loop between ULK1, ULK2 and AMPK. Dephosphorylated by PPM1A and PPM1B. Ubiquitinated. In terms of processing, glycosylated; O-GlcNAcylated by OGT, promoting the AMP-activated protein kinase (AMPK) activity.

The protein resides in the cytoplasm. The protein localises to the nucleus. The enzyme catalyses L-seryl-[protein] + ATP = O-phospho-L-seryl-[protein] + ADP + H(+). It catalyses the reaction L-threonyl-[protein] + ATP = O-phospho-L-threonyl-[protein] + ADP + H(+). It carries out the reaction L-seryl-[acetyl-CoA carboxylase] + ATP = O-phospho-L-seryl-[acetyl-CoA carboxylase] + ADP + H(+). The catalysed reaction is L-seryl-[3-hydroxy-3-methylglutaryl-coenzyme A reductase] + ATP = O-phospho-L-seryl-[3-hydroxy-3-methylglutaryl-coenzyme A reductase] + ADP + H(+). The enzyme catalyses L-seryl-[tau protein] + ATP = O-phospho-L-seryl-[tau protein] + ADP + H(+). It catalyses the reaction L-threonyl-[tau protein] + ATP = O-phospho-L-threonyl-[tau protein] + ADP + H(+). With respect to regulation, activated by phosphorylation on Thr-183. Binding of AMP to non-catalytic gamma subunit (PRKAG1, PRKAG2 or PRKAG3) results in allosteric activation, inducing phosphorylation on Thr-183. AMP-binding to gamma subunit also sustains activity by preventing dephosphorylation of Thr-183. ADP also stimulates Thr-183 phosphorylation, without stimulating already phosphorylated AMPK. ATP promotes dephosphorylation of Thr-183, rendering the enzyme inactive. Under physiological conditions AMPK mainly exists in its inactive form in complex with ATP, which is much more abundant than AMP. Selectively inhibited by compound C (6-[4-(2-Piperidin-1-yl-ethoxy)-phenyl)]-3-pyridin-4-yl-pyyrazolo[1,5-a] pyrimidine. Activated by resveratrol, a natural polyphenol present in red wine, and S17834, a synthetic polyphenol. Catalytic subunit of AMP-activated protein kinase (AMPK), an energy sensor protein kinase that plays a key role in regulating cellular energy metabolism. In response to reduction of intracellular ATP levels, AMPK activates energy-producing pathways and inhibits energy-consuming processes: inhibits protein, carbohydrate and lipid biosynthesis, as well as cell growth and proliferation. AMPK acts via direct phosphorylation of metabolic enzymes, and by longer-term effects via phosphorylation of transcription regulators. Regulates lipid synthesis by phosphorylating and inactivating lipid metabolic enzymes such as ACACA, ACACB, GYS1, HMGCR and LIPE; regulates fatty acid and cholesterol synthesis by phosphorylating acetyl-CoA carboxylase (ACACA and ACACB) and hormone-sensitive lipase (LIPE) enzymes, respectively. Promotes lipolysis of lipid droplets by mediating phosphorylation of isoform 1 of CHKA (CHKalpha2). Regulates insulin-signaling and glycolysis by phosphorylating IRS1, PFKFB2 and PFKFB3. AMPK stimulates glucose uptake in muscle by increasing the translocation of the glucose transporter SLC2A4/GLUT4 to the plasma membrane, possibly by mediating phosphorylation of TBC1D4/AS160. Regulates transcription and chromatin structure by phosphorylating transcription regulators involved in energy metabolism such as CRTC2/TORC2, FOXO3, histone H2B, HDAC5, MEF2C, MLXIPL/ChREBP, EP300, HNF4A, p53/TP53, SREBF1, SREBF2 and PPARGC1A. Acts as a key regulator of glucose homeostasis in liver by phosphorylating CRTC2/TORC2, leading to CRTC2/TORC2 sequestration in the cytoplasm. In response to stress, phosphorylates 'Ser-36' of histone H2B (H2BS36ph), leading to promote transcription. Acts as a key regulator of cell growth and proliferation by phosphorylating FNIP1, TSC2, RPTOR, WDR24 and ATG1/ULK1: in response to nutrient limitation, negatively regulates the mTORC1 complex by phosphorylating RPTOR component of the mTORC1 complex and by phosphorylating and activating TSC2. Also phosphorylates and inhibits GATOR2 subunit WDR24 in response to nutrient limitation, leading to suppress glucose-mediated mTORC1 activation. In response to energetic stress, phosphorylates FNIP1, inactivating the non-canonical mTORC1 signaling, thereby promoting nuclear translocation of TFEB and TFE3, and inducing transcription of lysosomal or autophagy genes. In response to nutrient limitation, promotes autophagy by phosphorylating and activating ATG1/ULK1. In that process, it also activates WDR45/WIPI4. Phosphorylates CASP6, thereby preventing its autoprocessing and subsequent activation. In response to nutrient limitation, phosphorylates transcription factor FOXO3 promoting FOXO3 mitochondrial import. Also acts as a regulator of cellular polarity by remodeling the actin cytoskeleton; probably by indirectly activating myosin. AMPK also acts as a regulator of circadian rhythm by mediating phosphorylation of CRY1, leading to destabilize it. May regulate the Wnt signaling pathway by phosphorylating CTNNB1, leading to stabilize it. Also has tau-protein kinase activity: in response to amyloid beta A4 protein (APP) exposure, activated by CAMKK2, leading to phosphorylation of MAPT/TAU; however the relevance of such data remains unclear in vivo. Also phosphorylates CFTR, EEF2K, KLC1, NOS3 and SLC12A1. Regulates hepatic lipogenesis. Activated via SIRT3, represses sterol regulatory element-binding protein (SREBP) transcriptional activities and ATP-consuming lipogenesis to restore cellular energy balance. Upon stress, regulates mitochondrial fragmentation through phosphorylation of MTFR1L. The chain is 5'-AMP-activated protein kinase catalytic subunit alpha-1 (Prkaa1) from Mus musculus (Mouse).